The sequence spans 202 residues: Imidazoleglycerol-phosphate dehydratase (202 aa).

The protein belongs to the imidazoleglycerol-phosphate dehydratase family.

It localises to the cytoplasm. The enzyme catalyses D-erythro-1-(imidazol-4-yl)glycerol 3-phosphate = 3-(imidazol-4-yl)-2-oxopropyl phosphate + H2O. The protein operates within amino-acid biosynthesis; L-histidine biosynthesis; L-histidine from 5-phospho-alpha-D-ribose 1-diphosphate: step 6/9. In Sinorhizobium fredii (strain NBRC 101917 / NGR234), this protein is Imidazoleglycerol-phosphate dehydratase.